Reading from the N-terminus, the 434-residue chain is uncharacterized protein (434 aa).

The signal sequence occupies residues 1–17 (MTFLLFQLLVLLRYSIG). The next 12 membrane-spanning stretches (helical) occupy residues 48-68 (AAIS…FTVL), 70-90 (EWVY…SVTA), 112-132 (YRVA…FTIF), 141-161 (TYGT…NAVV), 173-193 (WITG…RLVT), 206-226 (YGVH…TSFV), 232-252 (YCGL…LSGL), 271-291 (EGVY…HLGY), 305-325 (TSSI…TILF), 344-364 (WVLA…YIPL), 380-400 (ATFL…DTIF), and 404-424 (FSSL…IGTI).

Its subcellular location is the membrane. This is an uncharacterized protein from Arabidopsis thaliana (Mouse-ear cress).